A 343-amino-acid chain; its full sequence is Glycogen biosynthesis protein GlgD (343 aa).

It belongs to the bacterial/plant glucose-1-phosphate adenylyltransferase family.

Its function is as follows. Required for the synthesis of glycogen. The sequence is that of Glycogen biosynthesis protein GlgD (glgD) from Geobacillus stearothermophilus (Bacillus stearothermophilus).